Reading from the N-terminus, the 396-residue chain is Aldo-keto reductase ausK (396 aa).

Aspartate 76 is a binding site for NADP(+). Catalysis depends on tyrosine 81, which acts as the Proton donor. Histidine 156 contributes to the substrate binding site. NADP(+)-binding positions include 186-187, glutamine 212, 241-251, and 317-325; these read CN, DALGSGKFQSR, and RKIQHLHDN.

It belongs to the aldo/keto reductase family. Aldo/keto reductase 2 subfamily. Homodimer.

The protein operates within secondary metabolite biosynthesis; terpenoid biosynthesis. Its function is as follows. Aldo-keto reductase; part of the gene cluster that mediates the biosynthesis of calidodehydroaustin, a fungal meroterpenoid. The first step of the pathway is the synthesis of 3,5-dimethylorsellinic acid by the polyketide synthase ausA. 3,5-dimethylorsellinic acid is then prenylated by the polyprenyl transferase ausN. Further epoxidation by the FAD-dependent monooxygenase ausM and cyclization by the probable terpene cyclase ausL lead to the formation of protoaustinoid A. Protoaustinoid A is then oxidized to spiro-lactone preaustinoid A3 by the combined action of the FAD-binding monooxygenases ausB and ausC, and the dioxygenase ausE. Acid-catalyzed keto-rearrangement and ring contraction of the tetraketide portion of preaustinoid A3 by ausJ lead to the formation of preaustinoid A4. The aldo-keto reductase ausK, with the help of ausH, is involved in the next step by transforming preaustinoid A4 into isoaustinone which is in turn hydroxylated by the P450 monooxygenase ausI to form austinolide. The cytochrome P450 monooxygenase ausG modifies austinolide to austinol. Austinol is further acetylated to austin by the O-acetyltransferase ausP, which spontaneously changes to dehydroaustin. The cytochrome P450 monooxygenase ausR then converts dehydroaustin is into 7-dehydrodehydroaustin. The hydroxylation catalyzed by ausR permits the O-acetyltransferase ausQ to add an additional acetyl group to the molecule, leading to the formation of acetoxydehydroaustin. The short chain dehydrogenase ausT catalyzes the reduction of the double bond present between carbon atoms 1 and 2 to convert 7-dehydrodehydroaustin into 1,2-dihydro-7-hydroxydehydroaustin. AusQ catalyzes not only an acetylation reaction but also the addition of the PKS ausV diketide product to 1,2-dihydro-7-hydroxydehydroaustin, forming precalidodehydroaustin. Finally, the iron/alpha-ketoglutarate-dependent dioxygenase converts precalidodehydroaustin into calidodehydroaustin. In Aspergillus calidoustus, this protein is Aldo-keto reductase ausK.